We begin with the raw amino-acid sequence, 341 residues long: RNA 3'-terminal phosphate cyclase (341 aa).

Residues Gln-100 and 283-287 contribute to the ATP site; that span reads FLGDQ. Catalysis depends on His-307, which acts as the Tele-AMP-histidine intermediate.

It belongs to the RNA 3'-terminal cyclase family. Type 1 subfamily.

The protein localises to the cytoplasm. It carries out the reaction a 3'-end 3'-phospho-ribonucleotide-RNA + ATP = a 3'-end 2',3'-cyclophospho-ribonucleotide-RNA + AMP + diphosphate. In terms of biological role, catalyzes the conversion of 3'-phosphate to a 2',3'-cyclic phosphodiester at the end of RNA. The mechanism of action of the enzyme occurs in 3 steps: (A) adenylation of the enzyme by ATP; (B) transfer of adenylate to an RNA-N3'P to produce RNA-N3'PP5'A; (C) and attack of the adjacent 2'-hydroxyl on the 3'-phosphorus in the diester linkage to produce the cyclic end product. The biological role of this enzyme is unknown but it is likely to function in some aspects of cellular RNA processing. This is RNA 3'-terminal phosphate cyclase (rtcA) from Pyrococcus horikoshii (strain ATCC 700860 / DSM 12428 / JCM 9974 / NBRC 100139 / OT-3).